Reading from the N-terminus, the 92-residue chain is Acylphosphatase (92 aa).

One can recognise an Acylphosphatase-like domain in the interval 5 to 92 (CIAAYVYGVV…TPFETFKIRY (88 aa)). Active-site residues include arginine 20 and asparagine 38.

It belongs to the acylphosphatase family.

The catalysed reaction is an acyl phosphate + H2O = a carboxylate + phosphate + H(+). The protein is Acylphosphatase (acyP) of Yersinia enterocolitica serotype O:8 / biotype 1B (strain NCTC 13174 / 8081).